We begin with the raw amino-acid sequence, 578 residues long: Kelch-like protein 30 (578 aa).

One can recognise a BTB domain in the interval alanine 33–glutamine 100. One can recognise a BACK domain in the interval lysine 153 to glycine 255. 6 Kelch repeats span residues valine 270 to asparagine 326, asparagine 327 to glycine 377, glutamate 378 to glycine 422, leucine 424 to glycine 471, leucine 473 to aspartate 513, and alanine 514 to leucine 563.

This is Kelch-like protein 30 (KLHL30) from Homo sapiens (Human).